A 347-amino-acid polypeptide reads, in one-letter code: NADH-ubiquinone oxidoreductase chain 2 (347 aa).

11 helical membrane passes run 3–23 (PPIL…VLTS), 25–45 (HWLT…PILM), 59–79 (YLLT…IDLL), 96–116 (AMMT…FWVP), 122–142 (IHMS…LSIL), 149–169 (INPN…GWGG), 178–198 (ILAY…LYNP), 200–220 (MMIL…MLFM), 237–257 (APLI…LPPL), 274–294 (EMII…YFYM), and 325–345 (LLSP…LLSI).

It belongs to the complex I subunit 2 family. As to quaternary structure, core subunit of respiratory chain NADH dehydrogenase (Complex I) which is composed of 45 different subunits. Interacts with TMEM242.

The protein localises to the mitochondrion inner membrane. The catalysed reaction is a ubiquinone + NADH + 5 H(+)(in) = a ubiquinol + NAD(+) + 4 H(+)(out). Core subunit of the mitochondrial membrane respiratory chain NADH dehydrogenase (Complex I) which catalyzes electron transfer from NADH through the respiratory chain, using ubiquinone as an electron acceptor. Essential for the catalytic activity and assembly of complex I. The polypeptide is NADH-ubiquinone oxidoreductase chain 2 (Cynictis penicillata (Yellow mongoose)).